The primary structure comprises 132 residues: Small ribosomal subunit protein uS8c (132 aa).

This sequence belongs to the universal ribosomal protein uS8 family. Part of the 30S ribosomal subunit.

It is found in the plastid. Its subcellular location is the chloroplast. In terms of biological role, one of the primary rRNA binding proteins, it binds directly to 16S rRNA central domain where it helps coordinate assembly of the platform of the 30S subunit. The protein is Small ribosomal subunit protein uS8c (rps8) of Buxus microphylla (Littleleaf boxwood).